The chain runs to 330 residues: NADH-quinone oxidoreductase subunit H (330 aa).

The next 8 membrane-spanning stretches (helical) occupy residues 11–31, 81–101, 114–134, 154–174, 187–207, 238–258, 270–290, and 309–329; these read ILVA…CGAL, FIFV…FAII, IGIL…LFAG, ISYE…VGSF, LWFI…GVAV, FFVG…TLFF, QIPF…FILL, and FCLP…LAAA.

This sequence belongs to the complex I subunit 1 family. In terms of assembly, NDH-1 is composed of 13 different subunits. Subunits NuoA, H, J, K, L, M, N constitute the membrane sector of the complex.

Its subcellular location is the cell inner membrane. It carries out the reaction a quinone + NADH + 5 H(+)(in) = a quinol + NAD(+) + 4 H(+)(out). NDH-1 shuttles electrons from NADH, via FMN and iron-sulfur (Fe-S) centers, to quinones in the respiratory chain. The immediate electron acceptor for the enzyme in this species is believed to be ubiquinone. Couples the redox reaction to proton translocation (for every two electrons transferred, four hydrogen ions are translocated across the cytoplasmic membrane), and thus conserves the redox energy in a proton gradient. This subunit may bind ubiquinone. The protein is NADH-quinone oxidoreductase subunit H of Ectopseudomonas mendocina (strain ymp) (Pseudomonas mendocina).